Consider the following 287-residue polypeptide: 4-diphosphocytidyl-2-C-methyl-D-erythritol kinase (287 aa).

Residue K14 is part of the active site. 96–106 contributes to the ATP binding site; that stretch reads PWGAGLGGGSS. D138 is an active-site residue.

It belongs to the GHMP kinase family. IspE subfamily.

The enzyme catalyses 4-CDP-2-C-methyl-D-erythritol + ATP = 4-CDP-2-C-methyl-D-erythritol 2-phosphate + ADP + H(+). It functions in the pathway isoprenoid biosynthesis; isopentenyl diphosphate biosynthesis via DXP pathway; isopentenyl diphosphate from 1-deoxy-D-xylulose 5-phosphate: step 3/6. Catalyzes the phosphorylation of the position 2 hydroxy group of 4-diphosphocytidyl-2C-methyl-D-erythritol. The chain is 4-diphosphocytidyl-2-C-methyl-D-erythritol kinase from Methylibium petroleiphilum (strain ATCC BAA-1232 / LMG 22953 / PM1).